The chain runs to 550 residues: MRKMVPVVCFATMLLQVAHSAQGRYAQQLLTDLMENYSNALRPVEDTDKALNVTLQITLSQIKDMDERNQVLIAYLWIRQTWHDAYLRWNKEDYDGLEVIRIPSSLVWRPDLVLYNKADDDFSGPLDTNVVLRYNGEITWDAPAITKSSCVVDVSYFPFDSQECNLTFGSWTYNGNQVDIAMGMDSGDLSDFVENVEWECHGMPATKNVIMYGCCSDPYPDITYTVLLQRRSSFYIFNLLLPCFLISFLAPLGFYLPADSGEKVSLGVTVLLALTVFQLMVAESMPPSESVPLIGKYYIATMTMITASTALTIFIMNIHFCGAEAKPVPHWAKVLIIDYMSKIFFVYEVGENCATATSSSSSSSSSSHFGQDDVHQPNFSSHRQANGKPGGNSGRENQYRHKNPRPQTPGPQRHPKPRHQHHITRDEKNHLSSSKYEGFESNRNLPLGDCCKEAPPCCPEDEKTAVVAAAVASVTFGPCVFCSHGSSLPGVDSKLVRNVEYIANCFREQRATCAKGAEWKRVAKVMDRFFMWIFFIMVFLMSILIIGKAP.

A signal peptide spans 1 to 20 (MRKMVPVVCFATMLLQVAHS). Over 21-233 (AQGRYAQQLL…YTVLLQRRSS (213 aa)) the chain is Extracellular. N-linked (GlcNAc...) asparagine glycosylation is present at Asn52. Cys150 and Cys164 are disulfide-bonded. Asn165 is a glycosylation site (N-linked (GlcNAc...) asparagine). Residues Cys214 and Cys215 are joined by a disulfide bond. 3 helical membrane passes run 234–254 (FYIF…PLGF), 264–284 (VSLG…VAES), and 298–318 (YIAT…IMNI). Residues 319 to 528 (HFCGAEAKPV…WKRVAKVMDR (210 aa)) are Cytoplasmic-facing. Residues 357 to 439 (TSSSSSSSSS…HLSSSKYEGF (83 aa)) are disordered. Residues 358-367 (SSSSSSSSSS) show a composition bias toward low complexity. Over residues 413-422 (RHPKPRHQHH) the composition is skewed to basic residues. Residues 529–549 (FFMWIFFIMVFLMSILIIGKA) traverse the membrane as a helical segment.

Belongs to the ligand-gated ion channel (TC 1.A.9) family. Acetylcholine receptor (TC 1.A.9.1) subfamily. Expressed in the brain, liver, olfactory mucosa, pituitary gland and hair cells of the saccule.

It is found in the postsynaptic cell membrane. The protein resides in the cell membrane. The chain is Neuronal acetylcholine receptor subunit alpha-9-II from Oncorhynchus mykiss (Rainbow trout).